A 249-amino-acid polypeptide reads, in one-letter code: GTP cyclohydrolase III (249 aa).

Belongs to the archaeal-type GTP cyclohydrolase family.

It carries out the reaction GTP + 3 H2O = 2-amino-5-formylamino-6-(5-phospho-D-ribosylamino)pyrimidin-4(3H)-one + 2 phosphate + 2 H(+). Functionally, catalyzes the formation of 2-amino-5-formylamino-6-ribofuranosylamino-4(3H)-pyrimidinone ribonucleotide monophosphate and inorganic phosphate from GTP. Also has an independent pyrophosphate phosphohydrolase activity. The chain is GTP cyclohydrolase III from Methanothermobacter thermautotrophicus (strain ATCC 29096 / DSM 1053 / JCM 10044 / NBRC 100330 / Delta H) (Methanobacterium thermoautotrophicum).